The sequence spans 513 residues: Activin receptor type-2A (513 aa).

An N-terminal signal peptide occupies residues 1-19; it reads MGAATKLAFAVFLISCSSG. Topologically, residues 20-139 are extracellular; sequence AILGRSETQE…VTPKPPLFNT (120 aa). Cystine bridges form between C30/C60, C50/C78, C85/C104, C91/C103, and C105/C110. 2 N-linked (GlcNAc...) asparagine glycosylation sites follow: N43 and N66. A helical transmembrane segment spans residues 140–160; it reads LLYSLVPIMGIAVIVLFSFWM. The Cytoplasmic segment spans residues 161-513; the sequence is YRHHKLAYPP…VDFPPKESSL (353 aa). One can recognise a Protein kinase domain in the interval 192 to 485; that stretch reads LQLLEIKARG…EERIIQMQKL (294 aa). Residues 198-206 and K219 contribute to the ATP site; that span reads KARGRFGCV. D322 (proton acceptor) is an active-site residue.

It belongs to the protein kinase superfamily. TKL Ser/Thr protein kinase family. TGFB receptor subfamily. Requires Mg(2+) as cofactor. Mn(2+) serves as cofactor. In terms of tissue distribution, expressed in hen anterior pituitary during the ovulatory cycle and in the ovarian follicle.

Its subcellular location is the cell membrane. The catalysed reaction is L-threonyl-[receptor-protein] + ATP = O-phospho-L-threonyl-[receptor-protein] + ADP + H(+). The enzyme catalyses L-seryl-[receptor-protein] + ATP = O-phospho-L-seryl-[receptor-protein] + ADP + H(+). In terms of biological role, on ligand binding, forms a receptor complex consisting of two type II and two type I transmembrane serine/threonine kinases. Type II receptors phosphorylate and activate type I receptors which autophosphorylate, then bind and activate SMAD transcriptional regulators. Receptor for activin A, activin B and inhibin A. May modulate neuropeptide expression in dorsal root ganglia (DRG) neurons and ovarian follicle development. In Gallus gallus (Chicken), this protein is Activin receptor type-2A (ACVR2A).